Consider the following 146-residue polypeptide: Holo-[acyl-carrier-protein] synthase (146 aa).

Mg(2+) is bound by residues D8 and E61.

It belongs to the P-Pant transferase superfamily. AcpS family. Mg(2+) is required as a cofactor.

The protein localises to the cytoplasm. It carries out the reaction apo-[ACP] + CoA = holo-[ACP] + adenosine 3',5'-bisphosphate + H(+). Transfers the 4'-phosphopantetheine moiety from coenzyme A to a Ser of acyl-carrier-protein. In Rhodopseudomonas palustris (strain TIE-1), this protein is Holo-[acyl-carrier-protein] synthase.